The chain runs to 296 residues: Small ribosomal subunit protein uS2 (296 aa).

The interval Gln246–Lys272 is disordered.

This sequence belongs to the universal ribosomal protein uS2 family.

The protein is Small ribosomal subunit protein uS2 of Anaplasma phagocytophilum (strain HZ).